Here is an 852-residue protein sequence, read N- to C-terminus: Taste receptor type 1 member 3 (852 aa).

The signal sequence occupies residues 1–20 (MLGPAVLGLSLWALLQPGAG). Residues 21-570 (APLCLSQQLR…FLAWGEPAVL (550 aa)) lie on the Extracellular side of the membrane. N-linked (GlcNAc...) asparagine glycans are attached at residues asparagine 85, asparagine 130, asparagine 264, asparagine 285, asparagine 380, asparagine 411, asparagine 432, and asparagine 475. Residues 571-591 (LLLLLLSLALGLVLAALGLFV) traverse the membrane as a helical segment. Residues 592–603 (HHRDSPLVQASG) are Cytoplasmic-facing. A helical membrane pass occupies residues 604 to 624 (GPLACFGLVCLGLVCLSVLLF). Topologically, residues 625–639 (PGQPSPAQCLAQQPL) are extracellular. Residues 640–660 (SHLPLTGCLSTLFLQAAEIFV) form a helical membrane-spanning segment. Over 661–682 (ESELPLSWADRLSGCLRGPWAW) the chain is Cytoplasmic. A helical transmembrane segment spans residues 683–703 (LVVLLAMLVEVALCTWYLVAF). At 704-729 (PPEVVTDWHMLPTEALVHCRTRSWVS) the chain is on the extracellular side. Residues 730 to 750 (FGLAHATNATLAFLCFLGTFL) traverse the membrane as a helical segment. The Cytoplasmic portion of the chain corresponds to 751–762 (VRSQPGRYNRAR). The helical transmembrane segment at 763 to 783 (GLTFAMLAYFITWVSFVPLLA) threads the bilayer. Residues 784–791 (NVQVVLRP) are Extracellular-facing. Residues 792–812 (AVQMGALLLCVLGILAAFHLP) traverse the membrane as a helical segment. The Cytoplasmic segment spans residues 813 to 852 (RCYLLIRQPGLNTPEFFLGGGPGDAQGRNDGDTGNQGKHE). Positions 833–852 (GPGDAQGRNDGDTGNQGKHE) are disordered. Positions 839–852 (GRNDGDTGNQGKHE) are enriched in basic and acidic residues.

It belongs to the G-protein coupled receptor 3 family. TAS1R subfamily. In terms of assembly, forms homodimers or heterodimers with TAS1R1 and TAS1R2.

It localises to the cell membrane. Its function is as follows. Putative taste receptor. TAS1R1/TAS1R3 responds to the umami taste stimulus (the taste of monosodium glutamate). TAS1R2/TAS1R3 recognizes diverse natural and synthetic sweeteners. TAS1R3 is essential for the recognition and response to the disaccharide trehalose. Sequence differences within and between species can significantly influence the selectivity and specificity of taste responses. The polypeptide is Taste receptor type 1 member 3 (TAS1R3) (Gorilla gorilla gorilla (Western lowland gorilla)).